A 1320-amino-acid polypeptide reads, in one-letter code: Tetratricopeptide repeat protein 21A (1320 aa).

19 TPR repeats span residues 4–38, 110–143, 146–180, 181–213, 215–247, 334–367, 502–534, 572–605, 728–761, 762–795, 797–828, 837–869, 889–922, 924–956, 957–990, 1028–1061, 1201–1234, 1236–1268, and 1270–1303; these read NDSSLMAGIIYYSQEKYFHHVQQAAAVGLEKFSND, GTALYYAGLFLWLIGRHDKAKEYIDRMLKISRGF, AYVLRGWVDLTSDKPHTAKKAIEYLEQGIQDTKDV, LGLMGKAMYFMMQQNYSEALEVVNQITVTSGSF, PALVLKMQLFLARQDWEQTVEMGHRILEKDESN, VHVATELGYLFILKNQVKEALLWYSEAMKLDKDG, IDPLYLMAQVRYYSELENAQSILQRCLELDPAS, PLYHLIKARALNKAGDYPEAIKTLKMVIKLPALK, PHTSLLLGDALMSILEPEKALEVYDEAYRQNPHD, ASLASRIGHAYVKAHQYTEAIEYYEAAQKINGQD, LCCDLGKLLLKLKKVNKAEKVLKQALEHDIVQ, VKCLLLLAKVYKSHKKEAVIETLNKALDLQSRI, ASICIQFAEHYLAEKEYDKAVQSYKDVFSYLPTD, KVMLELAQLYLLQGHLDLCEQHCAILLQTEQNH, ETASVLMADLMFRKQKHEAAINLYHQVLEKAPDN, PGFNYCRGIYCWHIGQPNEALKFLNKARKDSTWG, EKSWLLLADIYCQGSKFDLALELLRRCVQYNKSC, KAYEYMGFIMEKEQSYKDAVTNYKLAWKYSHHA, and PAIGFKLAFNYLKDKKFVEAIEICNDVLREHPDY.

This sequence belongs to the TTC21 family. As to quaternary structure, interacts with IFT20. Interacts with IFT52. Interacts with IFT140. Interacts with CEP78; regulating IFT20 stability and localization. Strongly expressed in testis.

Its function is as follows. Intraflagellar transport (IFT)-associated protein required for spermatogenesis. Required for sperm flagellar formation and intraflagellar transport. The sequence is that of Tetratricopeptide repeat protein 21A from Homo sapiens (Human).